The primary structure comprises 905 residues: MADLEAGMVAAATDQGNSTRSQDDAATLIPNSGNLGSSNRSTKTARFKDDDELVEITLDVQRDSVAIQEVRGVDEGGSGHGTGFDGLPLVSPSSKSGKLTSKLRQVTNGLKMKSSSRKAPSPQAQQSAKRVRKRLDRTKSSAAVALKGLQFVTAKVGNDGWAAVEKRFNQLQVDGVLLRSRFGKCIGMDGSDEFAVQMFDSLARKRGIVKQVLTKDELKDFYEQLTDQGFDNRLRTFFDMVDKNADGRLTAEEVKEIIALSASANKLSKIKERADEYTALIMEELDPTNLGYIEMEDLEALLLQSPSEAAARSTTTHSSKLSKALSMKLASNKEMSPVRHYWQQFMYFLEENWKRSWVMTLWISICIALFIWKFIQYRNRAVFGIMGYCVTTAKGAAETLKFNMALVLLPVCRNTITWIRSKTQVGAVVPFNDNINFHKVIAAGVAVGVALHAGAHLTCDFPRLLHASDAQYELMKPFFGEKRPPNYWWFVKGTEGWTGVVMVVLMAIAFTLAQPWFRRNKLKDSNPLKKMTGFNAFWFTHHLFVIVYTLLFVHGTCLYLSRKWYKKTTWMYLAVPVVLYVSERILRLFRSHDAVGIQKVAVYPGNVLALYMSKPPGFRYRSGQYIFIKCTAVSPYEWHPFSITSAPGDDYLSVHIRTRGDWTSRLRTVFSEACRPPTEGESGLLRADLSKGITDEKARFPKLLVDGPYGAPAQDYREYDVLLLIGLGIGATPLISIVKDVLNHIQGEGSVGTTEPESSSKAKKKPFMTKRAYFYWVTREEGSFEWFRGVMNEVSEKDKDGVIELHNHCSSVYQEGDARSALIVMLQELQHAKKGVDILSGTSVKTHFARPNWRSVFKKVAVSHENQRVGVFYCGEPVLVPQLRQLSADFTHKTNTRFDFHKENF.

Disordered regions lie at residues 1 to 46 (MADL…KTAR) and 69 to 134 (EVRG…VRKR). At 1-355 (MADLEAGMVA…MYFLEENWKR (355 aa)) the chain is on the cytoplasmic side. Polar residues predominate over residues 29-44 (IPNSGNLGSSNRSTKT). Positions 75-84 (EGGSGHGTGF) are enriched in gly residues. Residues 91 to 108 (SPSSKSGKLTSKLRQVTN) are compositionally biased toward polar residues. EF-hand-like regions lie at residues 172-180 (QVDGVLLRS) and 206-217 (RGIVKQVLTKDE). 2 consecutive EF-hand domains span residues 229 to 264 (GFDN…SASA) and 273 to 308 (RADE…SPSE). Asp242, Asn244, Asp246, Arg248, and Glu253 together coordinate Ca(2+). Residues 356 to 376 (SWVMTLWISICIALFIWKFIQ) traverse the membrane as a helical segment. The Extracellular segment spans residues 377–440 (YRNRAVFGIM…FNDNINFHKV (64 aa)). The 157-residue stretch at 395–551 (GAAETLKFNM…HLFVIVYTLL (157 aa)) folds into the Ferric oxidoreductase domain. Residues 441–461 (IAAGVAVGVALHAGAHLTCDF) form a helical membrane-spanning segment. The Cytoplasmic portion of the chain corresponds to 462-496 (PRLLHASDAQYELMKPFFGEKRPPNYWWFVKGTEG). Residues 497–517 (WTGVVMVVLMAIAFTLAQPWF) traverse the membrane as a helical segment. Over 518 to 539 (RRNKLKDSNPLKKMTGFNAFWF) the chain is Extracellular. Residues 540-560 (THHLFVIVYTLLFVHGTCLYL) form a helical membrane-spanning segment. Residues 561-568 (SRKWYKKT) lie on the Cytoplasmic side of the membrane. A helical membrane pass occupies residues 569 to 586 (TWMYLAVPVVLYVSERIL). An FAD-binding FR-type domain is found at 587–715 (RLFRSHDAVG…DGPYGAPAQD (129 aa)). At 587–717 (RLFRSHDAVG…PYGAPAQDYR (131 aa)) the chain is on the extracellular side. The helical transmembrane segment at 718–738 (EYDVLLLIGLGIGATPLISIV) threads the bilayer. The Cytoplasmic segment spans residues 739–905 (KDVLNHIQGE…TRFDFHKENF (167 aa)).

The protein belongs to the RBOH (TC 5.B.1.3) family. In terms of assembly, monomer and homodimer, stabilized by swapping the EF-hand motifs. Interacts with GTP-bound RAC1.

It is found in the membrane. Calcium-dependent NADPH oxidase that generates superoxide. This Oryza sativa subsp. japonica (Rice) protein is Respiratory burst oxidase homolog protein B (RBOHB).